We begin with the raw amino-acid sequence, 213 residues long: Small ribosomal subunit protein uS3 (213 aa).

The KH type-2 domain occupies 38–106; that stretch reads IREYLENRLS…RVHINIVEIK (69 aa).

Belongs to the universal ribosomal protein uS3 family. As to quaternary structure, part of the 30S ribosomal subunit. Forms a tight complex with proteins S10 and S14.

Its function is as follows. Binds the lower part of the 30S subunit head. Binds mRNA in the 70S ribosome, positioning it for translation. The sequence is that of Small ribosomal subunit protein uS3 from Oceanobacillus iheyensis (strain DSM 14371 / CIP 107618 / JCM 11309 / KCTC 3954 / HTE831).